A 1120-amino-acid polypeptide reads, in one-letter code: Phosphatidylinositide phosphatase SAC2 (1120 aa).

One can recognise an SAC domain in the interval 167 to 518 (YKIFMDSDSF…GDTISRQYAG (352 aa)). One can recognise a hSac2 domain in the interval 593–760 (RGAQEQVSLL…RHSKPHEDIM (168 aa)). 2 disordered regions span residues 837-881 (SSLE…SREN) and 979-1008 (PAPK…LPRP). The segment covering 851–860 (LKDHGPHSEE) has biased composition (basic and acidic residues). 2 stretches are compositionally biased toward polar residues: residues 864 to 879 (DSDS…SGSR) and 998 to 1007 (SSHSQNQLPR).

The protein localises to the membrane. It is found in the clathrin-coated pit. It localises to the early endosome. Its subcellular location is the recycling endosome. The catalysed reaction is a myo-inositol phosphate + H2O = myo-inositol + phosphate. Functionally, inositol 4-phosphatase which mainly acts on phosphatidylinositol 4-phosphate. May be functionally linked to OCRL, which converts phosphatidylinositol 4,5-bisphosphate to phosphatidylinositol, for a sequential dephosphorylation of phosphatidylinositol 4,5-bisphosphate at the 5 and 4 position of inositol, thus playing an important role in the endocytic recycling. This Danio rerio (Zebrafish) protein is Phosphatidylinositide phosphatase SAC2.